We begin with the raw amino-acid sequence, 184 residues long: ATP synthase subunit delta (184 aa).

Belongs to the ATPase delta chain family. F-type ATPases have 2 components, F(1) - the catalytic core - and F(0) - the membrane proton channel. F(1) has five subunits: alpha(3), beta(3), gamma(1), delta(1), epsilon(1). F(0) has three main subunits: a(1), b(2) and c(10-14). The alpha and beta chains form an alternating ring which encloses part of the gamma chain. F(1) is attached to F(0) by a central stalk formed by the gamma and epsilon chains, while a peripheral stalk is formed by the delta and b chains.

It localises to the cell inner membrane. Its function is as follows. F(1)F(0) ATP synthase produces ATP from ADP in the presence of a proton or sodium gradient. F-type ATPases consist of two structural domains, F(1) containing the extramembraneous catalytic core and F(0) containing the membrane proton channel, linked together by a central stalk and a peripheral stalk. During catalysis, ATP synthesis in the catalytic domain of F(1) is coupled via a rotary mechanism of the central stalk subunits to proton translocation. This protein is part of the stalk that links CF(0) to CF(1). It either transmits conformational changes from CF(0) to CF(1) or is implicated in proton conduction. This Rhizorhabdus wittichii (strain DSM 6014 / CCUG 31198 / JCM 15750 / NBRC 105917 / EY 4224 / RW1) (Sphingomonas wittichii) protein is ATP synthase subunit delta.